The primary structure comprises 311 residues: Coelenterazine h 2-monooxygenase (311 aa).

The AB hydrolase-1 domain maps to 45 to 291; it reads NAVIFLHGNA…KGLHFSQEDA (247 aa). Substrate is bound by residues Asp162 and His285.

Monomer.

It catalyses the reaction coelenterazine h + O2 = excited coelenteramide h monoanion + hnu + CO2 + H(+). Functionally, upon binding the substrate, the enzyme catalyzes an oxygenation, producing a very short-lived hydroperoxide that cyclizes into a dioxetanone structure, which collapses, releasing a CO(2) molecule. The spontaneous breakdown of the dioxetanone releases the energy (about 50 kcal/mole) that is necessary to generate the excited state of the coelenteramide product, which is the singlet form of the monoanion. In vivo the product undergoes the process of nonradiative energy transfer to an accessory protein, a green fluorescent protein (GFP), which results in green bioluminescence. In vitro, in the absence of GFP, the product emits blue light. The protein is Coelenterazine h 2-monooxygenase of Renilla reniformis (Sea pansy).